Reading from the N-terminus, the 979-residue chain is Glycine dehydrogenase (decarboxylating) (979 aa).

At Lys-726 the chain carries N6-(pyridoxal phosphate)lysine.

It belongs to the GcvP family. The glycine cleavage system is composed of four proteins: P, T, L and H. It depends on pyridoxal 5'-phosphate as a cofactor.

It carries out the reaction N(6)-[(R)-lipoyl]-L-lysyl-[glycine-cleavage complex H protein] + glycine + H(+) = N(6)-[(R)-S(8)-aminomethyldihydrolipoyl]-L-lysyl-[glycine-cleavage complex H protein] + CO2. Functionally, the glycine cleavage system catalyzes the degradation of glycine. The P protein binds the alpha-amino group of glycine through its pyridoxal phosphate cofactor; CO(2) is released and the remaining methylamine moiety is then transferred to the lipoamide cofactor of the H protein. In Ralstonia pickettii (strain 12J), this protein is Glycine dehydrogenase (decarboxylating).